Consider the following 445-residue polypeptide: Methylenetetrahydrofolate--tRNA-(uracil-5-)-methyltransferase TrmFO (445 aa).

10–15 (GGGLAG) contacts FAD.

This sequence belongs to the MnmG family. TrmFO subfamily. FAD is required as a cofactor.

It localises to the cytoplasm. The enzyme catalyses uridine(54) in tRNA + (6R)-5,10-methylene-5,6,7,8-tetrahydrofolate + NADH + H(+) = 5-methyluridine(54) in tRNA + (6S)-5,6,7,8-tetrahydrofolate + NAD(+). It carries out the reaction uridine(54) in tRNA + (6R)-5,10-methylene-5,6,7,8-tetrahydrofolate + NADPH + H(+) = 5-methyluridine(54) in tRNA + (6S)-5,6,7,8-tetrahydrofolate + NADP(+). Its function is as follows. Catalyzes the folate-dependent formation of 5-methyl-uridine at position 54 (M-5-U54) in all tRNAs. The sequence is that of Methylenetetrahydrofolate--tRNA-(uracil-5-)-methyltransferase TrmFO from Microcystis aeruginosa (strain NIES-843 / IAM M-2473).